A 292-amino-acid polypeptide reads, in one-letter code: Cyclic dipurine nucleotide synthase (292 aa).

Q47 contributes to the ATP binding site. 48–52 is a GTP binding site; it reads GSYRN. Mg(2+)-binding residues include D61 and D63. Residues D63, 121 to 122, and D136 each bind ATP; that span reads NK. D136 contacts Mg(2+). The GTP site is built by K197 and S216.

The protein belongs to the CD-NTase family. E01 subfamily. Requires Mg(2+) as cofactor.

The catalysed reaction is 2 ATP = 3',3'-c-di-AMP + 2 diphosphate. It carries out the reaction 2 GTP = 3',3'-c-di-GMP + 2 diphosphate. The enzyme catalyses GTP + ATP = 3',3'-cGAMP + 2 diphosphate. Its function is as follows. Cyclic nucleotide synthase (second messenger synthase) of a CBASS antivirus system. CBASS (cyclic oligonucleotide-based antiphage signaling system) provides immunity against bacteriophage. The CD-NTase protein synthesizes cyclic nucleotides in response to infection; these serve as specific second messenger signals. The signals activate a diverse range of effectors, leading to bacterial cell death and thus abortive phage infection. A type I-A(GA) CBASS system. In terms of biological role, cyclic dinucleotide synthase that catalyzes the synthesis of 3'3'-cyclic GMP-AMP (cGAMP) from GTP and ATP, and of c-di-AMP and c-di-GMP, that are second messengers for cell signal transduction. This chain is Cyclic dipurine nucleotide synthase, found in Elizabethkingia meningoseptica (Chryseobacterium meningosepticum).